Reading from the N-terminus, the 114-residue chain is Protein S40-2 (114 aa).

The disordered stretch occupies residues 23–50; sequence RYTKLYNSRNDEKKGTRRHETAEKTSPV. Residues 31–45 are compositionally biased toward basic and acidic residues; the sequence is RNDEKKGTRRHETAE.

The protein belongs to the senescence regulator S40 family.

It is found in the cytoplasm. The protein is Protein S40-2 of Arabidopsis thaliana (Mouse-ear cress).